Here is a 486-residue protein sequence, read N- to C-terminus: Mitogen-activated protein kinase 17 (486 aa).

The 292-residue stretch at 16–307 (YQIQEVVGKG…AEEALADPYF (292 aa)) folds into the Protein kinase domain. ATP is bound by residues 22 to 30 (VGKGSYGVV) and Lys45. Asp142 (proton acceptor) is an active-site residue. At Thr178 the chain carries Phosphothreonine. Positions 178–180 (TDY) match the TXY motif. The residue at position 180 (Tyr180) is a Phosphotyrosine. Thr183 carries the phosphothreonine modification. The segment at 386–455 (EEHNDDEEEH…LSSQKASQVD (70 aa)) is disordered. Residues 422 to 433 (SVHAQSSSASVV) show a composition bias toward low complexity. Polar residues predominate over residues 440–452 (PNTATGLSSQKAS).

Belongs to the protein kinase superfamily. CMGC Ser/Thr protein kinase family. MAP kinase subfamily. Dually phosphorylated on Thr-178 and Tyr-180, which activates the enzyme.

The enzyme catalyses L-seryl-[protein] + ATP = O-phospho-L-seryl-[protein] + ADP + H(+). It carries out the reaction L-threonyl-[protein] + ATP = O-phospho-L-threonyl-[protein] + ADP + H(+). Its activity is regulated as follows. Activated by threonine and tyrosine phosphorylation. The polypeptide is Mitogen-activated protein kinase 17 (MPK17) (Arabidopsis thaliana (Mouse-ear cress)).